The sequence spans 71 residues: Translation initiation factor IF-1 (71 aa).

Residues 1–71 form the S1-like domain; sequence MAKQSAIEQD…LSKARITYRY (71 aa).

The protein belongs to the IF-1 family. Component of the 30S ribosomal translation pre-initiation complex which assembles on the 30S ribosome in the order IF-2 and IF-3, IF-1 and N-formylmethionyl-tRNA(fMet); mRNA recruitment can occur at any time during PIC assembly.

It is found in the cytoplasm. Functionally, one of the essential components for the initiation of protein synthesis. Stabilizes the binding of IF-2 and IF-3 on the 30S subunit to which N-formylmethionyl-tRNA(fMet) subsequently binds. Helps modulate mRNA selection, yielding the 30S pre-initiation complex (PIC). Upon addition of the 50S ribosomal subunit IF-1, IF-2 and IF-3 are released leaving the mature 70S translation initiation complex. This is Translation initiation factor IF-1 from Flavobacterium psychrophilum (strain ATCC 49511 / DSM 21280 / CIP 103535 / JIP02/86).